We begin with the raw amino-acid sequence, 196 residues long: Guanylate kinase (196 aa).

Residues 8 to 191 (GRLIVLTGPT…AAADLWSVIA (184 aa)) form the Guanylate kinase-like domain. Residue 15 to 22 (GPTAVGKG) coordinates ATP.

Belongs to the guanylate kinase family.

The protein resides in the cytoplasm. The enzyme catalyses GMP + ATP = GDP + ADP. In terms of biological role, essential for recycling GMP and indirectly, cGMP. The sequence is that of Guanylate kinase from Bifidobacterium longum (strain NCC 2705).